We begin with the raw amino-acid sequence, 343 residues long: Calcium/calmodulin-dependent protein kinase type 1B (343 aa).

One can recognise a Protein kinase domain in the interval tyrosine 15–isoleucine 270. ATP is bound by residues leucine 21 to valine 29 and lysine 44. The active-site Proton acceptor is aspartate 136. Residues lysine 290–arginine 311 form a calmodulin-binding region. A disordered region spans residues glycine 314 to tryptophan 343. Position 338 is a phosphoserine (serine 338).

It belongs to the protein kinase superfamily. CAMK Ser/Thr protein kinase family. CaMK subfamily. Expressed at highest levels in adult brain, and expressed in embryo. In the adult brain detected at high levels in the anterior olfactory nuclei, piriform cortex, septal nuclei, bed nuclei of the stria terminalis, hippocampal pyramidal cells, dentate granule cells, amygdala, hypothalamic nuclei, parabrachial nucleus, and nucleus of the solitary tract. Expressed at lower levels in adult ovary and heart and at very low levels in testis, lung and muscle.

It is found in the cytoplasm. The protein resides in the nucleus. It catalyses the reaction L-seryl-[protein] + ATP = O-phospho-L-seryl-[protein] + ADP + H(+). It carries out the reaction L-threonyl-[protein] + ATP = O-phospho-L-threonyl-[protein] + ADP + H(+). Activated by Ca(2+)/calmodulin. Its function is as follows. Calcium/calmodulin-dependent protein kinase belonging to a proposed calcium-triggered signaling cascade. In vitro phosphorylates CREB1 and SYN1/synapsin I. Phosphorylates and activates CAMK1. In Mus musculus (Mouse), this protein is Calcium/calmodulin-dependent protein kinase type 1B (Pnck).